A 347-amino-acid chain; its full sequence is Melatonin receptor type 1B-B (347 aa).

Over 1-36 the chain is Extracellular; the sequence is MPENIAFLTNSTDLGHVGRALGSSARPAWAIAVLAS. Residue Asn-10 is glycosylated (N-linked (GlcNAc...) asparagine). A helical membrane pass occupies residues 37 to 57; sequence VLIFTTVVDVLGNLLVIISVF. Over 58 to 72 the chain is Cytoplasmic; that stretch reads RNRKLRNAGNVFVVS. A helical transmembrane segment spans residues 73–93; sequence LAFADLVVAFYPYPLVLYAIF. Topologically, residues 94–105 are extracellular; it reads HDGWSLGETQCK. Residues Cys-104 and Cys-181 are joined by a disulfide bond. The helical transmembrane segment at 106 to 126 threads the bilayer; sequence ISGFLMGLSVIGSVFNITGIA. Over 127–148 the chain is Cytoplasmic; that stretch reads INRYCYICHSFAYGRLYSFRNT. The helical transmembrane segment at 149 to 169 threads the bilayer; sequence LLLVALIWALTVLAILPNFFV. Over 170-191 the chain is Extracellular; sequence GSLSYDPRVYSCTFTQTASSSY. The chain crosses the membrane as a helical span at residues 192–212; that stretch reads TVVVVVVHFLVPIAVVTFCYL. Topologically, residues 213 to 244 are cytoplasmic; the sequence is RIWVLVIQVRRKVKSEERSRVRPSDLRNFVTM. Residues 245-265 traverse the membrane as a helical segment; sequence FVVFVLFAICWAPLNLIGLVV. At 266–278 the chain is on the extracellular side; that stretch reads AINPEVMAPRVPE. Residues 279 to 299 form a helical membrane-spanning segment; it reads WLFVVSYFMAYFNSCLNAIIY. The Cytoplasmic segment spans residues 300-347; the sequence is GLLNRNFRKEYVRIMTAVWIPRRFVTETSRAATDGMRSKPSPAINNNE.

It belongs to the G-protein coupled receptor 1 family.

The protein resides in the cell membrane. Functionally, high affinity receptor for melatonin. The activity of this receptor is mediated by pertussis toxin sensitive G proteins that inhibits adenylate cyclase activity. The polypeptide is Melatonin receptor type 1B-B (mtnr1bb) (Danio rerio (Zebrafish)).